We begin with the raw amino-acid sequence, 212 residues long: Probable 2-dehydro-3-deoxy-6-phosphogalactonate aldolase (212 aa).

Residue arginine 18 participates in 2-dehydro-3-deoxy-6-phospho-D-galactonate binding. Residue glutamate 41 is the Proton donor/acceptor of the active site. Threonine 70, lysine 130, glycine 160, glycine 180, and serine 181 together coordinate 2-dehydro-3-deoxy-6-phospho-D-galactonate. The active-site Schiff-base intermediate with substrate is the lysine 130.

It belongs to the KHG/KDPG aldolase family. In terms of assembly, homotrimer.

It carries out the reaction 2-dehydro-3-deoxy-6-phospho-D-galactonate = D-glyceraldehyde 3-phosphate + pyruvate. Its pathway is carbohydrate acid metabolism; D-galactonate degradation; D-glyceraldehyde 3-phosphate and pyruvate from D-galactonate: step 3/3. Involved in the degradation of galactose via the DeLey-Doudoroff pathway. Catalyzes the reversible, stereospecific retro-aldol cleavage of 2-keto-3-deoxy-6-phosphogalactonate (KDPGal) to pyruvate and D-glyceraldehyde-3-phosphate. The polypeptide is Probable 2-dehydro-3-deoxy-6-phosphogalactonate aldolase (dgoA) (Rhizobium meliloti (strain 1021) (Ensifer meliloti)).